A 286-amino-acid polypeptide reads, in one-letter code: ATP synthase gamma chain (286 aa).

The protein belongs to the ATPase gamma chain family. As to quaternary structure, F-type ATPases have 2 components, CF(1) - the catalytic core - and CF(0) - the membrane proton channel. CF(1) has five subunits: alpha(3), beta(3), gamma(1), delta(1), epsilon(1). CF(0) has three main subunits: a, b and c.

The protein localises to the cell inner membrane. In terms of biological role, produces ATP from ADP in the presence of a proton gradient across the membrane. The gamma chain is believed to be important in regulating ATPase activity and the flow of protons through the CF(0) complex. In Shewanella denitrificans (strain OS217 / ATCC BAA-1090 / DSM 15013), this protein is ATP synthase gamma chain.